We begin with the raw amino-acid sequence, 365 residues long: tRNA 2-selenouridine synthase (365 aa).

Residues 15 to 138 (FVNDHPIMDA…MRQFLIETID (124 aa)) enclose the Rhodanese domain. C98 serves as the catalytic S-selanylcysteine intermediate.

This sequence belongs to the SelU family. Monomer.

It catalyses the reaction 5-methylaminomethyl-2-thiouridine(34) in tRNA + selenophosphate + (2E)-geranyl diphosphate + H2O + H(+) = 5-methylaminomethyl-2-selenouridine(34) in tRNA + (2E)-thiogeraniol + phosphate + diphosphate. The catalysed reaction is 5-methylaminomethyl-2-thiouridine(34) in tRNA + (2E)-geranyl diphosphate = 5-methylaminomethyl-S-(2E)-geranyl-thiouridine(34) in tRNA + diphosphate. The enzyme catalyses 5-methylaminomethyl-S-(2E)-geranyl-thiouridine(34) in tRNA + selenophosphate + H(+) = 5-methylaminomethyl-2-(Se-phospho)selenouridine(34) in tRNA + (2E)-thiogeraniol. It carries out the reaction 5-methylaminomethyl-2-(Se-phospho)selenouridine(34) in tRNA + H2O = 5-methylaminomethyl-2-selenouridine(34) in tRNA + phosphate. Involved in the post-transcriptional modification of the uridine at the wobble position (U34) of tRNA(Lys), tRNA(Glu) and tRNA(Gln). Catalyzes the conversion of 2-thiouridine (S2U-RNA) to 2-selenouridine (Se2U-RNA). Acts in a two-step process involving geranylation of 2-thiouridine (S2U) to S-geranyl-2-thiouridine (geS2U) and subsequent selenation of the latter derivative to 2-selenouridine (Se2U) in the tRNA chain. This is tRNA 2-selenouridine synthase from Shewanella halifaxensis (strain HAW-EB4).